The sequence spans 428 residues: Kynureninase (428 aa).

Residues threonine 104, threonine 105, 132–135 (FPSD), aspartate 213, histidine 216, and tyrosine 238 each bind pyridoxal 5'-phosphate. Lysine 239 is subject to N6-(pyridoxal phosphate)lysine. Pyridoxal 5'-phosphate-binding residues include tryptophan 267 and threonine 295.

It belongs to the kynureninase family. As to quaternary structure, homodimer. It depends on pyridoxal 5'-phosphate as a cofactor.

The enzyme catalyses L-kynurenine + H2O = anthranilate + L-alanine + H(+). It carries out the reaction 3-hydroxy-L-kynurenine + H2O = 3-hydroxyanthranilate + L-alanine + H(+). It participates in amino-acid degradation; L-kynurenine degradation; L-alanine and anthranilate from L-kynurenine: step 1/1. The protein operates within cofactor biosynthesis; NAD(+) biosynthesis; quinolinate from L-kynurenine: step 2/3. Functionally, catalyzes the cleavage of L-kynurenine (L-Kyn) and L-3-hydroxykynurenine (L-3OHKyn) into anthranilic acid (AA) and 3-hydroxyanthranilic acid (3-OHAA), respectively. The protein is Kynureninase of Bacillus cereus (strain ATCC 14579 / DSM 31 / CCUG 7414 / JCM 2152 / NBRC 15305 / NCIMB 9373 / NCTC 2599 / NRRL B-3711).